Here is a 152-residue protein sequence, read N- to C-terminus: Large ribosomal subunit protein bL9 (152 aa).

The protein belongs to the bacterial ribosomal protein bL9 family.

Binds to the 23S rRNA. In Prochlorococcus marinus (strain SARG / CCMP1375 / SS120), this protein is Large ribosomal subunit protein bL9.